We begin with the raw amino-acid sequence, 199 residues long: Glycerol-3-phosphate acyltransferase (199 aa).

Transmembrane regions (helical) follow at residues 5 to 25 (AFLV…VALV), 51 to 71 (KLGV…VLCA), 79 to 99 (VFLS…VFLY), 112 to 132 (VFLG…VAVI), and 153 to 173 (CAWL…GLVI).

Belongs to the PlsY family. Probably interacts with PlsX.

It is found in the cell inner membrane. It carries out the reaction an acyl phosphate + sn-glycerol 3-phosphate = a 1-acyl-sn-glycero-3-phosphate + phosphate. It participates in lipid metabolism; phospholipid metabolism. In terms of biological role, catalyzes the transfer of an acyl group from acyl-phosphate (acyl-PO(4)) to glycerol-3-phosphate (G3P) to form lysophosphatidic acid (LPA). This enzyme utilizes acyl-phosphate as fatty acyl donor, but not acyl-CoA or acyl-ACP. This Solidesulfovibrio magneticus (strain ATCC 700980 / DSM 13731 / RS-1) (Desulfovibrio magneticus) protein is Glycerol-3-phosphate acyltransferase.